The primary structure comprises 929 residues: Leucine--tRNA ligase (929 aa).

The short motif at Pro-42–His-52 is the 'HIGH' region element. Residues Lys-614–Ser-618 carry the 'KMSKS' region motif. ATP is bound at residue Lys-617.

This sequence belongs to the class-I aminoacyl-tRNA synthetase family.

The protein localises to the cytoplasm. The catalysed reaction is tRNA(Leu) + L-leucine + ATP = L-leucyl-tRNA(Leu) + AMP + diphosphate. The chain is Leucine--tRNA ligase from Trichodesmium erythraeum (strain IMS101).